We begin with the raw amino-acid sequence, 303 residues long: Guanosine-inosine kinase (303 aa).

Belongs to the carbohydrate kinase PfkB family. In terms of assembly, homodimer. Mg(2+) is required as a cofactor.

It carries out the reaction guanosine + ATP = GMP + ADP + H(+). The catalysed reaction is inosine + ATP = IMP + ADP + H(+). It participates in purine metabolism; IMP biosynthesis via salvage pathway; IMP from inosine: step 1/1. Its pathway is purine metabolism; GMP biosynthesis via salvage pathway. With respect to regulation, kinase activity is stimulated by pyrimidine nucleotides, especially CMP and CTP, and inhibited by AMP, ADP and GMP. Activity is stimulated by potassium or ammonium ions. In terms of biological role, catalyzes the phosphorylation of guanosine and inosine to GMP and IMP, respectively. Can also use deoxyguanosine. Shows a strong preference for guanosine. dATP, GTP and dGTP can serve as phosphate donors. This Exiguobacterium acetylicum (Brevibacterium acetylicum) protein is Guanosine-inosine kinase.